The primary structure comprises 517 residues: DNA-directed RNA polymerase subunit alpha (517 aa).

The protein belongs to the RNA polymerase alpha chain family. In plastids the minimal PEP RNA polymerase catalytic core is composed of four subunits: alpha, beta, beta', and beta''. When a (nuclear-encoded) sigma factor is associated with the core the holoenzyme is formed, which can initiate transcription.

The protein localises to the plastid. It localises to the chloroplast. The catalysed reaction is RNA(n) + a ribonucleoside 5'-triphosphate = RNA(n+1) + diphosphate. In terms of biological role, DNA-dependent RNA polymerase catalyzes the transcription of DNA into RNA using the four ribonucleoside triphosphates as substrates. The sequence is that of DNA-directed RNA polymerase subunit alpha (rpoA) from Stigeoclonium helveticum (Green alga).